A 129-amino-acid polypeptide reads, in one-letter code: Small ribosomal subunit protein uS8 (129 aa).

It belongs to the universal ribosomal protein uS8 family. As to quaternary structure, part of the 30S ribosomal subunit. Contacts proteins S5 and S12.

Its function is as follows. One of the primary rRNA binding proteins, it binds directly to 16S rRNA central domain where it helps coordinate assembly of the platform of the 30S subunit. This chain is Small ribosomal subunit protein uS8, found in Bdellovibrio bacteriovorus (strain ATCC 15356 / DSM 50701 / NCIMB 9529 / HD100).